The primary structure comprises 198 residues: Transmembrane protein 17 (198 aa).

N-linked (GlcNAc...) asparagine glycosylation is found at asparagine 13 and asparagine 23. Helical transmembrane passes span 45 to 65 (MSLY…IMML), 78 to 98 (FIVV…LYLG), 110 to 130 (LAGF…FLLF), and 142 to 162 (AVHI…FLTL).

The protein belongs to the TMEM17 family. In terms of assembly, part of the tectonic-like complex (also named B9 complex).

The protein resides in the cell projection. It is found in the cilium membrane. Transmembrane component of the tectonic-like complex, a complex localized at the transition zone of primary cilia and acting as a barrier that prevents diffusion of transmembrane proteins between the cilia and plasma membranes. Required for ciliogenesis and sonic hedgehog/SHH signaling. The protein is Transmembrane protein 17 (TMEM17) of Bos taurus (Bovine).